The sequence spans 239 residues: Phosphoribosylaminoimidazole-succinocarboxamide synthase (239 aa).

Belongs to the SAICAR synthetase family.

It carries out the reaction 5-amino-1-(5-phospho-D-ribosyl)imidazole-4-carboxylate + L-aspartate + ATP = (2S)-2-[5-amino-1-(5-phospho-beta-D-ribosyl)imidazole-4-carboxamido]succinate + ADP + phosphate + 2 H(+). It participates in purine metabolism; IMP biosynthesis via de novo pathway; 5-amino-1-(5-phospho-D-ribosyl)imidazole-4-carboxamide from 5-amino-1-(5-phospho-D-ribosyl)imidazole-4-carboxylate: step 1/2. This chain is Phosphoribosylaminoimidazole-succinocarboxamide synthase, found in Shouchella clausii (strain KSM-K16) (Alkalihalobacillus clausii).